The primary structure comprises 487 residues: Glutamyl-tRNA(Gln) amidotransferase subunit A (487 aa).

Active-site charge relay system residues include Lys-75 and Ser-150. The active-site Acyl-ester intermediate is Ser-174.

This sequence belongs to the amidase family. GatA subfamily. In terms of assembly, heterotrimer of A, B and C subunits.

It carries out the reaction L-glutamyl-tRNA(Gln) + L-glutamine + ATP + H2O = L-glutaminyl-tRNA(Gln) + L-glutamate + ADP + phosphate + H(+). In terms of biological role, allows the formation of correctly charged Gln-tRNA(Gln) through the transamidation of misacylated Glu-tRNA(Gln) in organisms which lack glutaminyl-tRNA synthetase. The reaction takes place in the presence of glutamine and ATP through an activated gamma-phospho-Glu-tRNA(Gln). This Deinococcus deserti (strain DSM 17065 / CIP 109153 / LMG 22923 / VCD115) protein is Glutamyl-tRNA(Gln) amidotransferase subunit A.